The chain runs to 115 residues: Large ribosomal subunit protein bL20c (115 aa).

It belongs to the bacterial ribosomal protein bL20 family.

Its subcellular location is the plastid. The protein resides in the chloroplast. Its function is as follows. Binds directly to 23S ribosomal RNA and is necessary for the in vitro assembly process of the 50S ribosomal subunit. It is not involved in the protein synthesizing functions of that subunit. In Mesostigma viride (Green alga), this protein is Large ribosomal subunit protein bL20c (rpl20).